The primary structure comprises 103 residues: Regulator of rDNA transcription protein 1 (103 aa).

2 helical membrane-spanning segments follow: residues Phe-9–Val-33 and Val-40–Phe-57.

It is found in the membrane. Identified in a screen for mutants with decreased levels of rDNA transcription. The polypeptide is Regulator of rDNA transcription protein 1 (RRT1) (Saccharomyces cerevisiae (strain ATCC 204508 / S288c) (Baker's yeast)).